A 224-amino-acid chain; its full sequence is PKHD-type hydroxylase SO_3913 (224 aa).

The 99-residue stretch at 78 to 176 (QFYPPLFNRY…RTSAFMWLQS (99 aa)) folds into the Fe2OG dioxygenase domain. Fe cation contacts are provided by His-96, Asp-98, and His-157. Arg-167 is a 2-oxoglutarate binding site.

Fe(2+) is required as a cofactor. The cofactor is L-ascorbate.

The protein is PKHD-type hydroxylase SO_3913 of Shewanella oneidensis (strain ATCC 700550 / JCM 31522 / CIP 106686 / LMG 19005 / NCIMB 14063 / MR-1).